The primary structure comprises 690 residues: Rho guanine nucleotide exchange factor 4 (690 aa).

The tract at residues 73–126 is ABR (APC-binding region) domain; that stretch reads KTQRKKLQKQAHVERRLHIGAVHKDGVKCWRKTIITSPESLNLPRRSHPLSQSA. A disordered region spans residues 113–145; the sequence is LNLPRRSHPLSQSAPTGLNHMGWPEHTPGTAMP. Residues 194 to 253 enclose the SH3 domain; it reads GSVVCAEALWDHVTMDDQELGFKAGDVIEVMDATNREWWWGRVADGEGWFPASFVRLRVN. The interval 257-282 is disordered; that stretch reads PADDDAPLAGNSGAEDGGAEAQSSKD. Positions 284 to 468 constitute a DH domain; sequence MRTNVINEIL…KNVAQLINER (185 aa). Positions 499-606 constitute a PH domain; it reads ELIYSGELTR…WLKAFARERE (108 aa).

In terms of assembly, isoform 3 interacts with RHOA and RAC1, and (via ABR domain) with APC. Found in a complex consisting of ARHGEF4, APC and CTNNB1. As to expression, expressed at high levels in the brain, skeletal muscle and testis and at low levels in the kidney, lung, small intestine, ovary and prostate. Expression is aberrantly enhanced in most colorectal tumors.

The protein resides in the cytoplasm. The protein localises to the cell projection. It localises to the ruffle membrane. In terms of biological role, acts as a guanine nucleotide exchange factor (GEF) for RHOA, RAC1 and CDC42 GTPases. Binding of APC may activate RAC1 GEF activity. The APC-ARHGEF4 complex seems to be involved in cell migration as well as in E-cadherin-mediated cell-cell adhesion. Required for MMP9 up-regulation via the JNK signaling pathway in colorectal tumor cells. Involved in tumor angiogenesis and may play a role in intestinal adenoma formation and tumor progression. This is Rho guanine nucleotide exchange factor 4 (ARHGEF4) from Homo sapiens (Human).